A 530-amino-acid polypeptide reads, in one-letter code: 5-aminolevulinate synthase, mitochondrial (530 aa).

Residues 1-26 (MFRPVLKVRPSFSYPYSIVSSRSVRL) constitute a mitochondrion transit peptide. Substrate contacts are provided by R73, S186, and K205. The pyridoxal 5'-phosphate site is built by S238, H266, and T316. K319 is an active-site residue. An N6-(pyridoxal phosphate)lysine modification is found at K319. 2 residues coordinate pyridoxal 5'-phosphate: T348 and T349. T434 is a binding site for substrate.

The protein belongs to the class-II pyridoxal-phosphate-dependent aminotransferase family. In terms of assembly, homodimer. Requires pyridoxal 5'-phosphate as cofactor.

Its subcellular location is the mitochondrion matrix. It carries out the reaction succinyl-CoA + glycine + H(+) = 5-aminolevulinate + CO2 + CoA. It functions in the pathway porphyrin-containing compound metabolism; protoporphyrin-IX biosynthesis; 5-aminolevulinate from glycine: step 1/1. In terms of biological role, catalyzes the synthesis of 5-aminolevulinate (ALA) from succinyl-CoA and glycine, the first and rate-limiting step in heme biosynthesis. The sequence is that of 5-aminolevulinate synthase, mitochondrial (HEM1) from Candida glabrata (strain ATCC 2001 / BCRC 20586 / JCM 3761 / NBRC 0622 / NRRL Y-65 / CBS 138) (Yeast).